We begin with the raw amino-acid sequence, 62 residues long: Conotoxin Qc5.2 (62 aa).

The first 22 residues, 1-22, serve as a signal peptide directing secretion; it reads MRCVPVFIILLLLSPSAPSVDA. The propeptide occupies 23 to 48; sequence HPMTKDDVPQASLHDDAKRTLQVPWM. The residue at position 60 (Val60) is a Valine amide.

It belongs to the conotoxin T superfamily. Post-translationally, contains 2 disulfide bonds that can be either 'C1-C3, C2-C4' or 'C1-C4, C2-C3', since these disulfide connectivities have been observed for conotoxins with cysteine framework V (for examples, see AC P0DQQ7 and AC P81755). As to expression, expressed by the venom duct.

The protein localises to the secreted. This Conus quercinus (Oak cone) protein is Conotoxin Qc5.2.